Reading from the N-terminus, the 308-residue chain is Zinc finger CCCH domain-containing protein 15 (308 aa).

The segment at 1–21 (MENKIAPFSYSGSSAGNSSSG) is disordered. Residues 9–21 (SYSGSSAGNSSSG) show a composition bias toward low complexity. A coiled-coil region spans residues 56 to 91 (TRLHEASLEAEALRLENTELRSMNLRLKNELNSLIR). The segment at 110-190 (LSIGGNDADE…GTVTKPGTCG (81 aa)) is disordered. S111 carries the phosphoserine modification. Residues 148–164 (RSSLPKSISVRSNGYSK) show a composition bias toward polar residues. 2 consecutive C3H1-type zinc fingers follow at residues 222–250 (MTKTELCNKWQETGTCPYGDHCQFAHGIK) and 260–288 (RYKTEVCRMVLAGDNCPYGHRCHFRHSLS).

Phosphorylated at Ser-111 by ASK7/BIN2 in the cytoplasm in the absence of brassinosteroids (BRs). Highly expressed in secondary cell wall-forming tissues and the xylem cells of roots. Expressed predominantly in inflorescence stems, flowers and siliques. Highly expressed in the basal portion of stems, where cells are undergoing secondary cell wall thickening. Highly expressed in meiocytes and tapetum from anthers.

It localises to the cytoplasm. The protein resides in the nucleus. Functionally, functions probably as a transcriptional factor that activates genes involved in secondary cell wall biosynthesis. Functions redudantly with C3H14 to regulate secondary cell wall formation. C3H14 and C3H15 have overlapping roles in the regulation of secondary cell wall formation and anther development. C3H14 may contribute more to secondary cell wall thickening while C3H15 could be more important in anther development. May regulate at both the transcriptional and post-transcriptional levels the expression of many genes involved in various biological processes, particularly those associated with cell wall metabolism and pollen development. Involved in the regulation of callose metabolism in male meiocytes, in integrity of newly formed microspores, and promotes male fertility. May be involved in the regulation of the callose synthesis genes CALS5 and CALS12, the potential degradation of callose walls-related genes A6 and MYB80, as well as other putative beta-1,3-glucanase genes. Negatively regulates cell elongation by inhibiting brassinosteroid (BR) signaling. Functions downstream of the BRI1 receptor as a negative regulator in the BR pathway. The polypeptide is Zinc finger CCCH domain-containing protein 15 (Arabidopsis thaliana (Mouse-ear cress)).